A 156-amino-acid polypeptide reads, in one-letter code: Peptide methionine sulfoxide reductase MsrA (156 aa).

Cys10 is a catalytic residue.

It belongs to the MsrA Met sulfoxide reductase family.

It carries out the reaction L-methionyl-[protein] + [thioredoxin]-disulfide + H2O = L-methionyl-(S)-S-oxide-[protein] + [thioredoxin]-dithiol. The enzyme catalyses [thioredoxin]-disulfide + L-methionine + H2O = L-methionine (S)-S-oxide + [thioredoxin]-dithiol. Its function is as follows. Has an important function as a repair enzyme for proteins that have been inactivated by oxidation. Catalyzes the reversible oxidation-reduction of methionine sulfoxide in proteins to methionine. The chain is Peptide methionine sulfoxide reductase MsrA from Acidobacterium capsulatum (strain ATCC 51196 / DSM 11244 / BCRC 80197 / JCM 7670 / NBRC 15755 / NCIMB 13165 / 161).